The sequence spans 192 residues: Thymidine kinase (192 aa).

ATP contacts are provided by residues serine 9 to serine 16 and aspartate 87 to glutamine 90. The Proton acceptor role is filled by glutamate 88. 4 residues coordinate Zn(2+): cysteine 145, cysteine 147, cysteine 182, and histidine 185.

This sequence belongs to the thymidine kinase family. As to quaternary structure, homotetramer.

It localises to the cytoplasm. It carries out the reaction thymidine + ATP = dTMP + ADP + H(+). In Photobacterium profundum (strain SS9), this protein is Thymidine kinase.